Consider the following 154-residue polypeptide: 3-hydroxyacyl-[acyl-carrier-protein] dehydratase FabZ (154 aa).

Residue His58 is part of the active site.

Belongs to the thioester dehydratase family. FabZ subfamily.

The protein resides in the cytoplasm. It catalyses the reaction a (3R)-hydroxyacyl-[ACP] = a (2E)-enoyl-[ACP] + H2O. Functionally, involved in unsaturated fatty acids biosynthesis. Catalyzes the dehydration of short chain beta-hydroxyacyl-ACPs and long chain saturated and unsaturated beta-hydroxyacyl-ACPs. The sequence is that of 3-hydroxyacyl-[acyl-carrier-protein] dehydratase FabZ from Protochlamydia amoebophila (strain UWE25).